An 85-amino-acid chain; its full sequence is Small ribosomal subunit protein bS16 (85 aa).

The protein belongs to the bacterial ribosomal protein bS16 family.

The sequence is that of Small ribosomal subunit protein bS16 from Pelobacter propionicus (strain DSM 2379 / NBRC 103807 / OttBd1).